The sequence spans 129 residues: Glycine cleavage system H protein (129 aa).

Residues 24 to 106 (HAVVGITDFA…YDGGWLFKLA (83 aa)) enclose the Lipoyl-binding domain. Lysine 65 is modified (N6-lipoyllysine).

Belongs to the GcvH family. As to quaternary structure, the glycine cleavage system is composed of four proteins: P, T, L and H. It depends on (R)-lipoate as a cofactor.

In terms of biological role, the glycine cleavage system catalyzes the degradation of glycine. The H protein shuttles the methylamine group of glycine from the P protein to the T protein. The sequence is that of Glycine cleavage system H protein from Hydrogenovibrio crunogenus (strain DSM 25203 / XCL-2) (Thiomicrospira crunogena).